The following is a 257-amino-acid chain: MSTPAFTVVIPARYGASRLPGKPLADLLGEPVVQHVYRRAVESGAARVVVATDDARIESACRDFGAEVLLTAPDHPTGTDRIAEVVDRLALVDEAIVVNLQGDEPLMPPELVALVAERLDTDPDAAIATLATPVTAADELFEPSVVKVVRDHRDHALYFSRAPVPWDRDRFDGIDDGAVAAGGWLRHLGLYAYRAAFLRRFPGLEPAPPERLESLEQLRALWHGFAIQVAATDQRPGPGVDTPADLEAVARRLQSTR.

It belongs to the KdsB family.

The protein localises to the cytoplasm. It catalyses the reaction 3-deoxy-alpha-D-manno-oct-2-ulosonate + CTP = CMP-3-deoxy-beta-D-manno-octulosonate + diphosphate. It functions in the pathway nucleotide-sugar biosynthesis; CMP-3-deoxy-D-manno-octulosonate biosynthesis; CMP-3-deoxy-D-manno-octulosonate from 3-deoxy-D-manno-octulosonate and CTP: step 1/1. Its pathway is bacterial outer membrane biogenesis; lipopolysaccharide biosynthesis. In terms of biological role, activates KDO (a required 8-carbon sugar) for incorporation into bacterial lipopolysaccharide in Gram-negative bacteria. The polypeptide is 3-deoxy-manno-octulosonate cytidylyltransferase (Halorhodospira halophila (strain DSM 244 / SL1) (Ectothiorhodospira halophila (strain DSM 244 / SL1))).